Here is a 511-residue protein sequence, read N- to C-terminus: MSKKPAALIILDGFGLRGETVGNAVAQAKKPNFDRYWNEFPHQTLTASGEAVGLPQGQMGNSEVGHLNIGAGRIVYQSLTRVNVAIRDGEFEKNETFLEAMTYAKENDKALHLFGLLSDGGVHSHIQHLFALLKLAKKEGLTKVYIHGFLDGRDVGQKTAKVYLKQLEEQIKEIGVGEVATLSGRYYSMDRDKRWDRVEKAYRAMAYGEGPSYQNIYDVVDDSYENGIYDEFVIPSVITRENGEPVAKVNDGDSVIFYNFRPDRAIQISNTFTNEDFRSFDRGEAHPKNLHFVCFTHFSETVDGYVAFKPVNLDNTVGEVLAQNGLKQLRIAETEKYPHVTFFMSGGREEEFPGEDRILINSPDVATYDLKPEMSAYEVKDALVADINADKHDAIILNFANPDMVGHSGMLEPTIKAIEAVDECLGAVVDAILAKGGHAIITADHGNADVLITEEGKPHTAHTTNPVPVIVTKKGATLREGGILADLSPTLLDLLGVEKPKEMTGTSLIQK.

Residue Asp12 coordinates Mn(2+). Tyr36 bears the Phosphotyrosine mark. Mn(2+) is bound at residue Ser62. The active-site Phosphoserine intermediate is Ser62. Residues His123, 153–154, Arg185, Arg191, 261–264, and Lys336 contribute to the substrate site; these read RD and RPDR. Residues Asp403, His407, Asp444, His445, and His462 each contribute to the Mn(2+) site.

It belongs to the BPG-independent phosphoglycerate mutase family. Monomer. Mn(2+) is required as a cofactor.

The catalysed reaction is (2R)-2-phosphoglycerate = (2R)-3-phosphoglycerate. The protein operates within carbohydrate degradation; glycolysis; pyruvate from D-glyceraldehyde 3-phosphate: step 3/5. In terms of biological role, essential for rapid growth and for sporulation. Catalyzes the interconversion of 2-phosphoglycerate and 3-phosphoglycerate. This chain is 2,3-bisphosphoglycerate-independent phosphoglycerate mutase, found in Bacillus pumilus (strain SAFR-032).